Consider the following 269-residue polypeptide: Subtilisin BL (269 aa).

Q2 lines the Ca(2+) pocket. The region spanning 5–268 (PWGISRVQAP…SGLVNAEAAT (264 aa)) is the Peptidase S8 domain. The active-site Charge relay system is D32. D40 is a Ca(2+) binding site. H62 functions as the Charge relay system in the catalytic mechanism. Ca(2+) is bound by residues L73, N75, I77, V79, A163, Y165, and A168. Residue S215 is the Charge relay system of the active site.

It belongs to the peptidase S8 family. Ca(2+) serves as cofactor.

It localises to the secreted. The catalysed reaction is Hydrolysis of proteins with broad specificity for peptide bonds, and a preference for a large uncharged residue in P1. Hydrolyzes peptide amides.. Functionally, subtilisin is an extracellular alkaline serine protease, it catalyzes the hydrolysis of proteins and peptide amides. The protein is Subtilisin BL of Lederbergia lenta (Bacillus lentus).